Consider the following 458-residue polypeptide: (R)-6-hydroxynicotine oxidase (458 aa).

Residues 33–204 (RHLQRPSLIA…TEVEVQLYEL (172 aa)) enclose the FAD-binding PCMH-type domain. FAD is bound by residues 67-73 (RSGGHNP), 129-130 (HP), 134-137 (FCGL), G144, T195, N413, and N450. H71 bears the Pros-8alpha-FAD histidine mark.

This sequence belongs to the oxygen-dependent FAD-linked oxidoreductase family. As to quaternary structure, monomer. It depends on FAD as a cofactor.

It is found in the cytoplasm. The catalysed reaction is (R)-6-hydroxynicotine + O2 + H2O = 6-hydroxypseudooxynicotine + H2O2. It carries out the reaction (R)-6-hydroxynicotine + O2 = 6-hydroxy-N-methylmyosmine + H2O2. It participates in alkaloid degradation; nicotine degradation; 6-hydroxypseudooxynicotine from nicotine (R-isomer route): step 2/2. Inhibited by (S)-6-hydroxynicotine. Inhibited by high concentrations of phenanthroline. Involved in the degradation of D-nicotine. Catalyzes the oxidation of (R)-6-hydroxynicotine (6-hydroxy-D-nicotine) to 6-hydroxypseudooxynicotine. Oxidation of the pyrrolidine ring of (R)-6-hydroxynicotine leads to the formation of the optically inactive 6-hydroxy-N-methylmyosmine, which hydrolyzes spontaneously to 6-hydroxypseudooxynicotine. Acts with absolute stereospecificity on the D-form of 6-hydroxynicotine. Shows lower activity with (R)-6-hydroxynornicotine, and weak activity with (R)-4-(1-methylpyrrolidine-2-yl)phenol, (R)-6-chloronicotine and (R)-nicotine. This chain is (R)-6-hydroxynicotine oxidase, found in Paenarthrobacter nicotinovorans (Arthrobacter nicotinovorans).